Here is a 421-residue protein sequence, read N- to C-terminus: 3-alpha-mycarosylerythronolide B desosaminyl transferase (421 aa).

A signal peptide spans 1–23 (MRVVFSSMASKSHLFGLVPLAWA).

This sequence belongs to the glycosyltransferase 28 family. Heterotetramer composed of EryCII and EryCIII.

The catalysed reaction is 3-O-alpha-L-mycarosylerythronolide B + dTDP-alpha-D-desosamine = erythromycin D + dTDP + H(+). The protein operates within antibiotic biosynthesis; erythromycin biosynthesis. Functionally, catalyzes the conversion of alpha-L-mycarosylerythronolide B into erythromycin D in the erythromycin biosynthesis pathway. In Saccharopolyspora erythraea (strain ATCC 11635 / DSM 40517 / JCM 4748 / NBRC 13426 / NCIMB 8594 / NRRL 2338), this protein is 3-alpha-mycarosylerythronolide B desosaminyl transferase (eryCIII).